A 252-amino-acid chain; its full sequence is uncharacterized protein (252 aa).

Positions 1–23 are cleaved as a signal peptide; the sequence is MKLLKTVPAIVMLAGGMFASLNA. The disordered stretch occupies residues 231–252; the sequence is EPPESAPEHTDRRTTLSLGYSM.

This is an uncharacterized protein from Escherichia coli (strain K12).